The sequence spans 357 residues: MFDQLESIVGRYEELGELLSDPEVVSDTKRFMELSREEADLRDKVATYNEYKKVLETISDSEEMLGEGGLDDDMKEMLKEELSSAKSQKELLEEEIKILLLPKDPNDGKNIILEIRGAAGGDEAALFAGDLLNMYQHFSESQGWKFEIMEANITGIGGYKEVSALISGPSVYSKLKYESGAHRVQRVPVTETQGRVHTSTATVLVMPEVEEFEMTIDQKDLRVDIYHASGAGGQNVNKVATAVRMVHLPTGIKVEMQEERTQQKNRDKAIKLLNTKVFDYYQQIELDKQNAERKSTVGTGDRSERIRTYNFPQNRVTDHRIGLTLQKLDSILSGKMDEVIDALIVYDQTKKLEELNK.

Glutamine 234 is subject to N5-methylglutamine.

This sequence belongs to the prokaryotic/mitochondrial release factor family. Post-translationally, methylated by PrmC. Methylation increases the termination efficiency of RF1.

Its subcellular location is the cytoplasm. Peptide chain release factor 1 directs the termination of translation in response to the peptide chain termination codons UAG and UAA. The sequence is that of Peptide chain release factor 1 (prfA) from Lactococcus lactis subsp. lactis (strain IL1403) (Streptococcus lactis).